The chain runs to 263 residues: Tryptophan synthase alpha chain (263 aa).

Catalysis depends on proton acceptor residues Glu-49 and Asp-60.

Belongs to the TrpA family. As to quaternary structure, tetramer of two alpha and two beta chains.

It carries out the reaction (1S,2R)-1-C-(indol-3-yl)glycerol 3-phosphate + L-serine = D-glyceraldehyde 3-phosphate + L-tryptophan + H2O. It functions in the pathway amino-acid biosynthesis; L-tryptophan biosynthesis; L-tryptophan from chorismate: step 5/5. In terms of biological role, the alpha subunit is responsible for the aldol cleavage of indoleglycerol phosphate to indole and glyceraldehyde 3-phosphate. In Jannaschia sp. (strain CCS1), this protein is Tryptophan synthase alpha chain.